The chain runs to 62 residues: Large ribosomal subunit protein bL28 (62 aa).

This sequence belongs to the bacterial ribosomal protein bL28 family.

This is Large ribosomal subunit protein bL28 from Helicobacter pylori (strain HPAG1).